We begin with the raw amino-acid sequence, 1362 residues long: DNA-directed RNA polymerase subunit beta (1362 aa).

Belongs to the RNA polymerase beta chain family. As to quaternary structure, the RNAP catalytic core consists of 2 alpha, 1 beta, 1 beta' and 1 omega subunit. When a sigma factor is associated with the core the holoenzyme is formed, which can initiate transcription.

The enzyme catalyses RNA(n) + a ribonucleoside 5'-triphosphate = RNA(n+1) + diphosphate. Its function is as follows. DNA-dependent RNA polymerase catalyzes the transcription of DNA into RNA using the four ribonucleoside triphosphates as substrates. This Acinetobacter baumannii (strain AB307-0294) protein is DNA-directed RNA polymerase subunit beta.